Consider the following 369-residue polypeptide: Chorismate synthase (369 aa).

NADP(+) is bound by residues Arg-48 and Arg-54. FMN is bound by residues 125-127 (RSS), 238-239 (NA), Gly-283, 298-302 (KPTSS), and Arg-324.

It belongs to the chorismate synthase family. In terms of assembly, homotetramer. FMNH2 serves as cofactor.

It carries out the reaction 5-O-(1-carboxyvinyl)-3-phosphoshikimate = chorismate + phosphate. Its pathway is metabolic intermediate biosynthesis; chorismate biosynthesis; chorismate from D-erythrose 4-phosphate and phosphoenolpyruvate: step 7/7. Functionally, catalyzes the anti-1,4-elimination of the C-3 phosphate and the C-6 proR hydrogen from 5-enolpyruvylshikimate-3-phosphate (EPSP) to yield chorismate, which is the branch point compound that serves as the starting substrate for the three terminal pathways of aromatic amino acid biosynthesis. This reaction introduces a second double bond into the aromatic ring system. This chain is Chorismate synthase, found in Acidiphilium cryptum (strain JF-5).